We begin with the raw amino-acid sequence, 446 residues long: Exodeoxyribonuclease 7 large subunit (446 aa).

Belongs to the XseA family. In terms of assembly, heterooligomer composed of large and small subunits.

It localises to the cytoplasm. It carries out the reaction Exonucleolytic cleavage in either 5'- to 3'- or 3'- to 5'-direction to yield nucleoside 5'-phosphates.. Its function is as follows. Bidirectionally degrades single-stranded DNA into large acid-insoluble oligonucleotides, which are then degraded further into small acid-soluble oligonucleotides. This chain is Exodeoxyribonuclease 7 large subunit, found in Streptococcus equi subsp. zooepidemicus (strain MGCS10565).